Reading from the N-terminus, the 239-residue chain is Endonuclease V (239 aa).

Residues D50 and D118 each coordinate Mg(2+).

Belongs to the endonuclease V family. It depends on Mg(2+) as a cofactor.

It is found in the cytoplasm. The enzyme catalyses Endonucleolytic cleavage at apurinic or apyrimidinic sites to products with a 5'-phosphate.. Its function is as follows. DNA repair enzyme involved in the repair of deaminated bases. Selectively cleaves double-stranded DNA at the second phosphodiester bond 3' to a deoxyinosine leaving behind the intact lesion on the nicked DNA. This chain is Endonuclease V, found in Xylella fastidiosa (strain 9a5c).